We begin with the raw amino-acid sequence, 148 residues long: 3-dehydroquinate dehydratase (148 aa).

The active-site Proton acceptor is Tyr23. Substrate contacts are provided by Asn75, His81, and Asp88. Catalysis depends on His101, which acts as the Proton donor. Substrate-binding positions include 102–103 (LS) and Arg112.

The protein belongs to the type-II 3-dehydroquinase family. In terms of assembly, homododecamer.

The enzyme catalyses 3-dehydroquinate = 3-dehydroshikimate + H2O. It participates in metabolic intermediate biosynthesis; chorismate biosynthesis; chorismate from D-erythrose 4-phosphate and phosphoenolpyruvate: step 3/7. Its function is as follows. Catalyzes a trans-dehydration via an enolate intermediate. In Ectopseudomonas mendocina (strain ymp) (Pseudomonas mendocina), this protein is 3-dehydroquinate dehydratase.